The primary structure comprises 336 residues: Secreted effector protein SifA (336 aa).

The interval 1–330 is interaction with host PLEKHM2; sequence MPITIGNGFL…LHVRSEQQSG (330 aa).

The protein belongs to the Sif family. As to quaternary structure, interacts with host PLEKHM2. Interacts with SseJ; the interaction is indirect.

The protein resides in the secreted. It localises to the host cytoplasm. Its subcellular location is the host cell membrane. In terms of biological role, effector proteins function to alter host cell physiology and promote bacterial survival in host tissues. This protein is required for endosomal tubulation and formation of Salmonella-induced filaments (Sifs), which are filamentous structures containing lysosomal membrane glycoproteins within epithelial cells. Sif formation is concomitant with intracellular bacterial replication. In Salmonella typhimurium (strain LT2 / SGSC1412 / ATCC 700720), this protein is Secreted effector protein SifA (sifA).